Reading from the N-terminus, the 377-residue chain is Succinyl-diaminopimelate desuccinylase (377 aa).

His-67 serves as a coordination point for Zn(2+). Asp-69 is a catalytic residue. Zn(2+) is bound at residue Asp-100. The Proton acceptor role is filled by Glu-134. Residues Glu-135, Glu-163, and His-349 each coordinate Zn(2+).

The protein belongs to the peptidase M20A family. DapE subfamily. As to quaternary structure, homodimer. Zn(2+) is required as a cofactor. The cofactor is Co(2+).

It catalyses the reaction N-succinyl-(2S,6S)-2,6-diaminopimelate + H2O = (2S,6S)-2,6-diaminopimelate + succinate. It functions in the pathway amino-acid biosynthesis; L-lysine biosynthesis via DAP pathway; LL-2,6-diaminopimelate from (S)-tetrahydrodipicolinate (succinylase route): step 3/3. Functionally, catalyzes the hydrolysis of N-succinyl-L,L-diaminopimelic acid (SDAP), forming succinate and LL-2,6-diaminopimelate (DAP), an intermediate involved in the bacterial biosynthesis of lysine and meso-diaminopimelic acid, an essential component of bacterial cell walls. The chain is Succinyl-diaminopimelate desuccinylase from Haemophilus influenzae (strain PittEE).